The chain runs to 83 residues: Small ribosomal subunit protein bS16 (83 aa).

Belongs to the bacterial ribosomal protein bS16 family.

The chain is Small ribosomal subunit protein bS16 from Albidiferax ferrireducens (strain ATCC BAA-621 / DSM 15236 / T118) (Rhodoferax ferrireducens).